A 245-amino-acid polypeptide reads, in one-letter code: Eukaryotic translation initiation factor 3 subunit K (245 aa).

The 182-residue stretch at 46–227 (YDCYANLALL…EAKGTVVREN (182 aa)) folds into the PCI domain.

Belongs to the eIF-3 subunit K family. As to quaternary structure, component of the eukaryotic translation initiation factor 3 (eIF-3) complex.

Its subcellular location is the cytoplasm. Its function is as follows. Component of the eukaryotic translation initiation factor 3 (eIF-3) complex, which is involved in protein synthesis of a specialized repertoire of mRNAs and, together with other initiation factors, stimulates binding of mRNA and methionyl-tRNAi to the 40S ribosome. The eIF-3 complex specifically targets and initiates translation of a subset of mRNAs involved in cell proliferation. The chain is Eukaryotic translation initiation factor 3 subunit K from Botryotinia fuckeliana (strain B05.10) (Noble rot fungus).